The primary structure comprises 189 residues: Peptidyl-tRNA hydrolase (189 aa).

Tyr14 is a tRNA binding site. The active-site Proton acceptor is His19. TRNA contacts are provided by Phe64, Asn66, and Asn112.

The protein belongs to the PTH family. Monomer.

The protein localises to the cytoplasm. The enzyme catalyses an N-acyl-L-alpha-aminoacyl-tRNA + H2O = an N-acyl-L-amino acid + a tRNA + H(+). Functionally, hydrolyzes ribosome-free peptidyl-tRNAs (with 1 or more amino acids incorporated), which drop off the ribosome during protein synthesis, or as a result of ribosome stalling. Its function is as follows. Catalyzes the release of premature peptidyl moieties from peptidyl-tRNA molecules trapped in stalled 50S ribosomal subunits, and thus maintains levels of free tRNAs and 50S ribosomes. The sequence is that of Peptidyl-tRNA hydrolase from Sphingopyxis alaskensis (strain DSM 13593 / LMG 18877 / RB2256) (Sphingomonas alaskensis).